Consider the following 693-residue polypeptide: Cleavage and polyadenylation specificity factor subunit 3-I (693 aa).

Residues 81–86 (HFHIDH) carry the HXHXDH motif motif.

The protein belongs to the metallo-beta-lactamase superfamily. RNA-metabolizing metallo-beta-lactamase-like family. INTS11 subfamily. As to quaternary structure, component of the CPSF complex, at least composed of CPSF160, CPSF100, CPSF73-I, CPSF73-II, CPSF30, FY and FIPS5. Interacts with CLPS3, CPSF100, CPSF160 and FY. In terms of tissue distribution, highly expressed in carpels. Also detected in seedlings, roots, stems, leaves, flowers and siliques.

The protein resides in the nucleus. Functionally, component of the cleavage and polyadenylation specificity factor (CPSF) complex that play a key role in pre-mRNA 3'-end formation, recognizing the AAUAAA signal sequence and interacting with poly(A) polymerase and other factors to bring about cleavage and poly(A) addition. May function as mRNA 3'-end-processing endonuclease and also be involved in the histone 3'-end pre-mRNA processing. The chain is Cleavage and polyadenylation specificity factor subunit 3-I (CPSF73-I) from Arabidopsis thaliana (Mouse-ear cress).